Consider the following 418-residue polypeptide: AP-3 complex subunit mu-1 (418 aa).

Positions 176-417 (NNEAYFDVVE…ITKAGKFQVR (242 aa)) constitute an MHD domain.

Belongs to the adaptor complexes medium subunit family. In terms of assembly, adaptor protein complex 3 (AP-3) is a heterotetramer composed of two large adaptins (delta-type subunit AP3D1 and beta-type subunit AP3B1 or AP3B2), a medium adaptin (mu-type subunit AP3M1 or AP3M2) and a small adaptin (sigma-type subunit APS1 or AP3S2). Interacts with AGAP1. AP-3 associates with the BLOC-1 complex.

It localises to the golgi apparatus. The protein resides in the cytoplasmic vesicle membrane. In terms of biological role, part of the AP-3 complex, an adaptor-related complex which is not clathrin-associated. The complex is associated with the Golgi region as well as more peripheral structures. It facilitates the budding of vesicles from the Golgi membrane and may be directly involved in trafficking to lysosomes. In concert with the BLOC-1 complex, AP-3 is required to target cargos into vesicles assembled at cell bodies for delivery into neurites and nerve terminals. This chain is AP-3 complex subunit mu-1 (Ap3m1), found in Rattus norvegicus (Rat).